Reading from the N-terminus, the 219-residue chain is Mucosal pentraxin (219 aa).

The first 19 residues, methionine 1–alanine 19, serve as a signal peptide directing secretion. Positions lysine 24–proline 219 constitute a Pentraxin (PTX) domain. Asparagine 51 carries N-linked (GlcNAc...) asparagine glycosylation. An intrachain disulfide couples cysteine 55 to cysteine 114. Residues aspartate 77, asparagine 78, glutamate 155, glutamine 156, aspartate 157, and glutamine 167 each contribute to the Ca(2+) site.

The protein belongs to the pentraxin family. As to quaternary structure, homopentamer. Pentraxin (or pentaxin) have a discoid arrangement of 5 non-covalently bound subunits. Requires Ca(2+) as cofactor. In terms of tissue distribution, expressed in colon.

Its subcellular location is the secreted. This is Mucosal pentraxin (Mptx1) from Mus musculus (Mouse).